Reading from the N-terminus, the 576-residue chain is D-lactate dehydrogenase [cytochrome], mitochondrial (576 aa).

Residues 139 to 320 (EANQRPEIVL…TEATIKCHVR (182 aa)) form the FAD-binding PCMH-type domain.

This sequence belongs to the FAD-binding oxidoreductase/transferase type 4 family. FAD is required as a cofactor. The cofactor is Zn(2+).

It is found in the mitochondrion matrix. The enzyme catalyses (R)-lactate + 2 Fe(III)-[cytochrome c] = 2 Fe(II)-[cytochrome c] + pyruvate + 2 H(+). In terms of biological role, catalyzes the stereospecific oxidation of D-lactate to pyruvate. The sequence is that of D-lactate dehydrogenase [cytochrome], mitochondrial (DLD1) from Kluyveromyces lactis (strain ATCC 8585 / CBS 2359 / DSM 70799 / NBRC 1267 / NRRL Y-1140 / WM37) (Yeast).